The following is a 211-amino-acid chain: ATP phosphoribosyltransferase (211 aa).

Belongs to the ATP phosphoribosyltransferase family. Short subfamily. In terms of assembly, heteromultimer composed of HisG and HisZ subunits.

Its subcellular location is the cytoplasm. It carries out the reaction 1-(5-phospho-beta-D-ribosyl)-ATP + diphosphate = 5-phospho-alpha-D-ribose 1-diphosphate + ATP. It functions in the pathway amino-acid biosynthesis; L-histidine biosynthesis; L-histidine from 5-phospho-alpha-D-ribose 1-diphosphate: step 1/9. Its function is as follows. Catalyzes the condensation of ATP and 5-phosphoribose 1-diphosphate to form N'-(5'-phosphoribosyl)-ATP (PR-ATP). Has a crucial role in the pathway because the rate of histidine biosynthesis seems to be controlled primarily by regulation of HisG enzymatic activity. The polypeptide is ATP phosphoribosyltransferase (Bacillus thuringiensis subsp. konkukian (strain 97-27)).